Here is an 876-residue protein sequence, read N- to C-terminus: AP-5 complex subunit beta-1 (876 aa).

As to quaternary structure, probably part of the adaptor protein complex 5 (AP-5), a tetramer composed of AP5B1, AP5M1, AP5S1 and AP5Z1. Interacts with ZFYVE26 and SPG11.

As part of AP-5, a probable fifth adaptor protein complex, it may be involved in endosomal transport. The protein is AP-5 complex subunit beta-1 (Ap5b1) of Rattus norvegicus (Rat).